Here is a 263-residue protein sequence, read N- to C-terminus: Alpha-tubulin N-acetyltransferase 2 (263 aa).

The N-acetyltransferase domain maps to 1-181 (MEIAFDLSTI…NKYALCSNFF (181 aa)). 115-128 (FFVVPTEQRSGNGF) is a binding site for acetyl-CoA. 2 disordered regions span residues 191-223 (TPRQ…NRPR) and 242-263 (EVDP…RRIW). The segment covering 200–212 (RASSAVSSHASSR) has biased composition (low complexity). Residues 253-263 (NARDFGHRRIW) show a composition bias toward basic and acidic residues.

The protein belongs to the acetyltransferase ATAT1 family. As to expression, expressed in touch receptor neurons and in a subset of ciliated neurons, including PDE, ADE, CEP, and OLQ neurons.

The enzyme catalyses L-lysyl-[alpha-tubulin] + acetyl-CoA = N(6)-acetyl-L-lysyl-[alpha-tubulin] + CoA + H(+). Functionally, specifically acetylates 'Lys-40' in alpha-tubulin/mec-12 on the lumenal side of microtubules. Promotes microtubule destabilization and accelerates microtubule dynamics; this activity may be independent of acetylation activity. Acetylates alpha-tubulin with a slow enzymatic rate, due to a catalytic site that is not optimized for acetyl transfer. Enters the microtubule through each end and diffuses quickly throughout the lumen of microtubules. Acetylates only long/old microtubules because of its slow acetylation rate since it does not have time to act on dynamically unstable microtubules before the enzyme is released. Required for the maintenance of touch receptor neurons and possibly other type of neurons involved in locomotion. This chain is Alpha-tubulin N-acetyltransferase 2 (atat-2), found in Caenorhabditis elegans.